Here is a 202-residue protein sequence, read N- to C-terminus: Glycerol-3-phosphate acyltransferase (202 aa).

4 consecutive transmembrane segments (helical) span residues 2-22, 85-105, 119-139, and 158-178; these read ANLL…AVVV, LAMV…HRFA, AINP…AFFF, and VLME…ILLI.

The protein belongs to the PlsY family. Probably interacts with PlsX.

The protein localises to the cell inner membrane. It carries out the reaction an acyl phosphate + sn-glycerol 3-phosphate = a 1-acyl-sn-glycero-3-phosphate + phosphate. Its pathway is lipid metabolism; phospholipid metabolism. Its function is as follows. Catalyzes the transfer of an acyl group from acyl-phosphate (acyl-PO(4)) to glycerol-3-phosphate (G3P) to form lysophosphatidic acid (LPA). This enzyme utilizes acyl-phosphate as fatty acyl donor, but not acyl-CoA or acyl-ACP. This chain is Glycerol-3-phosphate acyltransferase, found in Cupriavidus pinatubonensis (strain JMP 134 / LMG 1197) (Cupriavidus necator (strain JMP 134)).